The sequence spans 89 residues: Small ribosomal subunit protein uS15 (89 aa).

This sequence belongs to the universal ribosomal protein uS15 family. In terms of assembly, part of the 30S ribosomal subunit. Forms a bridge to the 50S subunit in the 70S ribosome, contacting the 23S rRNA.

In terms of biological role, one of the primary rRNA binding proteins, it binds directly to 16S rRNA where it helps nucleate assembly of the platform of the 30S subunit by binding and bridging several RNA helices of the 16S rRNA. Functionally, forms an intersubunit bridge (bridge B4) with the 23S rRNA of the 50S subunit in the ribosome. In Sinorhizobium medicae (strain WSM419) (Ensifer medicae), this protein is Small ribosomal subunit protein uS15.